A 344-amino-acid polypeptide reads, in one-letter code: MKLKSLVFSLSALFLVLGFTGCKSKAQAKAEQEAQERKAFMAENAKIEKRLMQAKNAATEAEANVYYPEKFAQIEDLEKQSSEAKEQDDLKKANSLGSAAADKYETLANKMKIANQRSKIEANKLAKYDEESYRLGEEAEKKIDGLYKSDSVAALQTSNESLMYYNKVIDAGYKSLSQDAKKTADDAKAALTAVKVAASLKPQQEEADGIYAKAEEAENSAQYEQSYGGYTSAAQAYNDLTQIIKAKRLEAQKAMQAAKTKQELSAKLANEADKESPLPENAEGFSKEPIEVEPLPTDVLNAPQDEKAEETVPVEEMNENSSEEVNGNAEKIESTEEPIEGGVQ.

Residues 1-21 (MKLKSLVFSLSALFLVLGFTG) form the signal peptide. Residue Cys22 is the site of N-palmitoyl cysteine attachment. A lipid anchor (S-diacylglycerol cysteine) is attached at Cys22. Residues 257–344 (AAKTKQELSA…TEEPIEGGVQ (88 aa)) form a disordered region. Over residues 260–277 (TKQELSAKLANEADKESP) the composition is skewed to basic and acidic residues. Composition is skewed to acidic residues over residues 312-322 (VPVEEMNENSS) and 335-344 (TEEPIEGGVQ).

It to T.pallidum TmpA.

Its subcellular location is the cell membrane. This is Treponemal membrane protein A (tmpA) from Treponema phagedenis.